The following is a 198-amino-acid chain: Holliday junction resolvase RecU (198 aa).

A disordered region spans residues 1 to 22; sequence MVNYPHKVSSQKRQTSLSQPKN. Positions 11 to 22 are enriched in polar residues; it reads QKRQTSLSQPKN. Mg(2+) contacts are provided by Thr-81, Asp-83, Glu-96, and Gln-115.

It belongs to the RecU family. Mg(2+) serves as cofactor.

Its subcellular location is the cytoplasm. The catalysed reaction is Endonucleolytic cleavage at a junction such as a reciprocal single-stranded crossover between two homologous DNA duplexes (Holliday junction).. Functionally, endonuclease that resolves Holliday junction intermediates in genetic recombination. Cleaves mobile four-strand junctions by introducing symmetrical nicks in paired strands. Promotes annealing of linear ssDNA with homologous dsDNA. Required for DNA repair, homologous recombination and chromosome segregation. The sequence is that of Holliday junction resolvase RecU from Streptococcus pneumoniae (strain P1031).